The primary structure comprises 432 residues: Trigger factor (432 aa).

The region spanning 161–246 (EDRVTIDFTG…LKKVEERELP (86 aa)) is the PPIase FKBP-type domain.

The protein belongs to the FKBP-type PPIase family. Tig subfamily. Homodimer and monomer. In vivo most of the ribosomes are in complex with monomeric TF. Uncomplexed TF, however, is in a monomer-dimer equilibrium with approximately two thirds of TF existing in a dimeric state.

It localises to the cytoplasm. The catalysed reaction is [protein]-peptidylproline (omega=180) = [protein]-peptidylproline (omega=0). Its function is as follows. Involved in protein export. Acts as a chaperone by maintaining the newly synthesized protein in an open conformation. Functions as a peptidyl-prolyl cis-trans isomerase. The sequence is that of Trigger factor from Shigella boydii serotype 4 (strain Sb227).